A 179-amino-acid polypeptide reads, in one-letter code: UPF0302 protein BLi02393/BL02764 (179 aa).

This sequence belongs to the UPF0302 family.

The sequence is that of UPF0302 protein BLi02393/BL02764 from Bacillus licheniformis (strain ATCC 14580 / DSM 13 / JCM 2505 / CCUG 7422 / NBRC 12200 / NCIMB 9375 / NCTC 10341 / NRRL NRS-1264 / Gibson 46).